A 608-amino-acid chain; its full sequence is Nuclear protein localization protein 4 homolog (608 aa).

Alanine 2 is subject to N-acetylalanine. Residue lysine 179 is modified to N6-acetyllysine. Residues 226-363 (IMFENHTVAD…MCRLSPDGHF (138 aa)) form the MPN domain. The RanBP2-type zinc finger occupies 580–608 (TAAMWACQHCTFMNQPGTGHCEMCSLPRT).

It belongs to the NPL4 family. Heterodimer with UFD1. The heterodimer binds ubiquitinated proteins. The heterodimer binds to VCP and inhibits Golgi membrane fusion. Interacts with ZFAND2B; probably through VCP. As to expression, expressed at highest levels in brain, heart, skeletal muscle, kidney and fetal liver.

Its subcellular location is the cytoplasm. The protein resides in the cytosol. The protein localises to the endoplasmic reticulum. It is found in the nucleus. Its pathway is protein degradation; proteasomal ubiquitin-dependent pathway. In terms of biological role, the ternary complex containing UFD1, VCP and NPLOC4 binds ubiquitinated proteins and is necessary for the export of misfolded proteins from the ER to the cytoplasm, where they are degraded by the proteasome. The NPLOC4-UFD1-VCP complex regulates spindle disassembly at the end of mitosis and is necessary for the formation of a closed nuclear envelope. Acts as a negative regulator of type I interferon production via the complex formed with VCP and UFD1, which binds to RIGI and recruits RNF125 to promote ubiquitination and degradation of RIGI. In Homo sapiens (Human), this protein is Nuclear protein localization protein 4 homolog (NPLOC4).